The chain runs to 511 residues: Glucose-6-phosphate 1-dehydrogenase, cytoplasmic isoform (511 aa).

NADP(+) is bound by residues 36–43, arginine 71, tyrosine 151, and lysine 178; that span reads GASGDLAK. D-glucose 6-phosphate-binding positions include lysine 178, 208-212, glutamate 246, and aspartate 265; that span reads HYLGK. The active-site Proton acceptor is the histidine 270. NADP(+) is bound at residue lysine 353. Residues lysine 356 and arginine 361 each coordinate D-glucose 6-phosphate. NADP(+)-binding residues include lysine 362, arginine 366, and arginine 390. Position 392 (glutamine 392) interacts with D-glucose 6-phosphate. NADP(+) contacts are provided by residues 398–400, 418–420, arginine 484, and tryptophan 506; these read YMK and DLS.

This sequence belongs to the glucose-6-phosphate dehydrogenase family. As to quaternary structure, homotetramer. As to expression, found in tubers, stolons, roots, and flower buds.

The protein resides in the cytoplasm. It catalyses the reaction D-glucose 6-phosphate + NADP(+) = 6-phospho-D-glucono-1,5-lactone + NADPH + H(+). It participates in carbohydrate degradation; pentose phosphate pathway; D-ribulose 5-phosphate from D-glucose 6-phosphate (oxidative stage): step 1/3. Regulated by metabolites. Catalyzes the rate-limiting step of the oxidative pentose-phosphate pathway, which represents a route for the dissimilation of carbohydrates besides glycolysis. The main function of this enzyme is to generate NADPH for reductive biosyntheses. This is Glucose-6-phosphate 1-dehydrogenase, cytoplasmic isoform (G6PDH) from Solanum tuberosum (Potato).